We begin with the raw amino-acid sequence, 444 residues long: Proline--tRNA ligase (444 aa).

Belongs to the class-II aminoacyl-tRNA synthetase family. ProS type 2 subfamily. As to quaternary structure, homodimer.

It is found in the cytoplasm. The enzyme catalyses tRNA(Pro) + L-proline + ATP = L-prolyl-tRNA(Pro) + AMP + diphosphate. Catalyzes the attachment of proline to tRNA(Pro) in a two-step reaction: proline is first activated by ATP to form Pro-AMP and then transferred to the acceptor end of tRNA(Pro). This is Proline--tRNA ligase from Pelagibacter ubique (strain HTCC1062).